Reading from the N-terminus, the 392-residue chain is tRNA (guanine(6)-N2)-methyltransferase (392 aa).

The region spanning 73 to 183 (SAIPLLNHFS…DSELFVGVDT (111 aa)) is the THUMP domain. S-adenosyl-L-methionine-binding positions include 199–203 (HPAHL), 230–232 (SGT), glutamate 275, 303–304 (DA), and asparagine 317.

This sequence belongs to the methyltransferase superfamily.

It is found in the cytoplasm. It carries out the reaction guanosine(6) in tRNA + S-adenosyl-L-methionine = N(2)-methylguanosine(6) in tRNA + S-adenosyl-L-homocysteine + H(+). Its function is as follows. S-adenosyl-L-methionine-dependent methyltransferase that catalyzes the methylation of the guanosine nucleotide at position 6 (m2G6) in tRNA. The sequence is that of tRNA (guanine(6)-N2)-methyltransferase from Archaeoglobus fulgidus (strain ATCC 49558 / DSM 4304 / JCM 9628 / NBRC 100126 / VC-16).